The sequence spans 123 residues: Unknown 12C protein (123 aa).

Residues 1–17 (MMSALFLVLSVSLLVSG) form the signal peptide.

Post-translationally, contains 6 disulfide bonds. In terms of tissue distribution, expressed in acontia, a specialised envenomation structure laden with batteries of venom-containing nematocysts found only in the superfamily Metridioidea.

It is found in the secreted. The protein resides in the nematocyst. Cysteine-rich protein with probable toxin activity. The polypeptide is Unknown 12C protein (Calliactis polypus (Hermit crab anemone)).